We begin with the raw amino-acid sequence, 120 residues long: Movement protein TGB2 (120 aa).

Residues 1–8 lie on the Cytoplasmic side of the membrane; it reads MPFAQPPD. Residues 9–29 traverse the membrane as a helical segment; it reads YSKSVFPIAVGIAVAVVLFTL. The Lumenal portion of the chain corresponds to 30–71; sequence TRSTLPQVGDNIHNLPHGGNYQDGTKRISYCGPRDSFPSSSL. A helical membrane pass occupies residues 72-92; the sequence is ISSGTPMIIGIIIFLIFAIYV. Topologically, residues 93 to 120 are cytoplasmic; it reads SEKWSRSGSRRCSCCVPGAPACTATVHE.

Belongs to the Tymovirales TGBp2 protein family.

It is found in the host endoplasmic reticulum membrane. In terms of biological role, plays a role in viral cell-to-cell propagation, by facilitating genome transport to neighboring plant cells through plasmosdesmata,. This Crataegus (hawthorn) protein is Movement protein TGB2.